Consider the following 57-residue polypeptide: Large ribosomal subunit protein bL32 (57 aa).

This sequence belongs to the bacterial ribosomal protein bL32 family.

This chain is Large ribosomal subunit protein bL32, found in Streptomyces avermitilis (strain ATCC 31267 / DSM 46492 / JCM 5070 / NBRC 14893 / NCIMB 12804 / NRRL 8165 / MA-4680).